A 201-amino-acid chain; its full sequence is Small ribosomal subunit protein uS4 (201 aa).

An S4 RNA-binding domain is found at 91–151 (SRLDNVVYRA…DKSINTLPFE (61 aa)).

It belongs to the universal ribosomal protein uS4 family. As to quaternary structure, part of the 30S ribosomal subunit. Contacts protein S5. The interaction surface between S4 and S5 is involved in control of translational fidelity.

In terms of biological role, one of the primary rRNA binding proteins, it binds directly to 16S rRNA where it nucleates assembly of the body of the 30S subunit. Functionally, with S5 and S12 plays an important role in translational accuracy. This is Small ribosomal subunit protein uS4 from Mycolicibacterium gilvum (strain PYR-GCK) (Mycobacterium gilvum (strain PYR-GCK)).